The chain runs to 319 residues: Ornithine carbamoyltransferase (319 aa).

Carbamoyl phosphate contacts are provided by residues 55–58 (STRT), glutamine 82, arginine 106, and 133–136 (HPCQ). Residues asparagine 171, aspartate 234, and 238 to 239 (SM) each bind L-ornithine. Residues 274-275 (CL) and arginine 302 contribute to the carbamoyl phosphate site.

This sequence belongs to the aspartate/ornithine carbamoyltransferase superfamily. OTCase family.

It is found in the cytoplasm. The catalysed reaction is carbamoyl phosphate + L-ornithine = L-citrulline + phosphate + H(+). Its pathway is amino-acid biosynthesis; L-arginine biosynthesis; L-arginine from L-ornithine and carbamoyl phosphate: step 1/3. In terms of biological role, reversibly catalyzes the transfer of the carbamoyl group from carbamoyl phosphate (CP) to the N(epsilon) atom of ornithine (ORN) to produce L-citrulline. The protein is Ornithine carbamoyltransferase (argF) of Corynebacterium glutamicum (strain ATCC 13032 / DSM 20300 / JCM 1318 / BCRC 11384 / CCUG 27702 / LMG 3730 / NBRC 12168 / NCIMB 10025 / NRRL B-2784 / 534).